An 86-amino-acid chain; its full sequence is Mu-theraphotoxin-Hhn1d (86 aa).

The first 21 residues, 1–21 (MKASMFLALAGLALLFVVCYA), serve as a signal peptide directing secretion. The propeptide occupies 22–49 (SESEEKEFSNELLSSVLAVDDNSKGEER). 3 cysteine pairs are disulfide-bonded: C51/C66, C58/C73, and C65/C80. I84 is modified (isoleucine amide).

Belongs to the neurotoxin 10 (Hwtx-1) family. 22 (Htx-4) subfamily. As to quaternary structure, monomer. Expressed by the venom gland.

It is found in the secreted. Neurotoxin. Selectively blocks neuronal tetrodotoxin-sensitive voltage-gated sodium channels (Nav). Does not affect tetrodotoxin-resistant voltage-gated sodium channels or calcium channels. This is Mu-theraphotoxin-Hhn1d from Cyriopagopus hainanus (Chinese bird spider).